The following is a 397-amino-acid chain: Pyridinium-3,5-bisthiocarboxylic acid mononucleotide nickel insertion protein (397 aa).

It belongs to the LarC family.

It catalyses the reaction Ni(II)-pyridinium-3,5-bisthiocarboxylate mononucleotide = pyridinium-3,5-bisthiocarboxylate mononucleotide + Ni(2+). Involved in the biosynthesis of a nickel-pincer cofactor ((SCS)Ni(II) pincer complex). Binds Ni(2+), and functions in nickel delivery to pyridinium-3,5-bisthiocarboxylic acid mononucleotide (P2TMN), to form the mature cofactor. Is thus probably required for the activation of nickel-pincer cofactor-dependent enzymes. This chain is Pyridinium-3,5-bisthiocarboxylic acid mononucleotide nickel insertion protein, found in Thermotoga petrophila (strain ATCC BAA-488 / DSM 13995 / JCM 10881 / RKU-1).